A 486-amino-acid polypeptide reads, in one-letter code: Cardiolipin synthase A (486 aa).

Transmembrane regions (helical) follow at residues 3 to 23 and 38 to 58; these read TFYTVISWLSVFGYWLLIAGV and MAWLLIIYILPLVGIIAYLSF. PLD phosphodiesterase domains are found at residues 219–246 and 399–426; these read MDLRQHRKIVLIDNYVAYTGSMNMVDPR and EGGLLHSKSVLVDGQLSLVGTVNLDMRS. Active-site residues include His-224, Lys-226, Asp-231, His-404, Lys-406, and Asp-411.

It belongs to the phospholipase D family. Cardiolipin synthase subfamily. ClsA sub-subfamily.

Its subcellular location is the cell inner membrane. The catalysed reaction is 2 a 1,2-diacyl-sn-glycero-3-phospho-(1'-sn-glycerol) = a cardiolipin + glycerol. In terms of biological role, catalyzes the reversible phosphatidyl group transfer from one phosphatidylglycerol molecule to another to form cardiolipin (CL) (diphosphatidylglycerol) and glycerol. The protein is Cardiolipin synthase A of Yersinia pseudotuberculosis serotype O:1b (strain IP 31758).